Here is a 300-residue protein sequence, read N- to C-terminus: Platelet-derived growth factor D (300 aa).

The CUB domain occupies 1-114 (QVTGNGHVQS…PGFKIYYSFV (114 aa)). C53 and C75 are oxidised to a cystine. An N-linked (GlcNAc...) asparagine glycan is attached at N220.

The protein belongs to the PDGF/VEGF growth factor family. Homodimer; disulfide-linked. Interacts with PDGFRB homodimers, and with heterodimers formed by PDGFRA and PDGFRB. Post-translationally, activated by proteolytic cleavage. Proteolytic removal of the N-terminal CUB domain releasing the core domain is necessary for unmasking the receptor-binding epitopes of the core domain. Cleavage after Arg-191 or Arg-193 by urokinase plasminogen activator gives rise to the active form.

It is found in the secreted. Growth factor that plays an essential role in the regulation of embryonic development, cell proliferation, cell migration, survival and chemotaxis. Potent mitogen for cells of mesenchymal origin. Plays an important role in wound healing. Induces macrophage recruitment, increased interstitial pressure, and blood vessel maturation during angiogenesis. Can initiate events that lead to a mesangial proliferative glomerulonephritis, including influx of monocytes and macrophages and production of extracellular matrix. This Oryctolagus cuniculus (Rabbit) protein is Platelet-derived growth factor D (PDGFD).